The primary structure comprises 188 residues: Ribosome-recycling factor (188 aa).

This sequence belongs to the RRF family.

The protein localises to the cytoplasm. Responsible for the release of ribosomes from messenger RNA at the termination of protein biosynthesis. May increase the efficiency of translation by recycling ribosomes from one round of translation to another. The chain is Ribosome-recycling factor from Anaeromyxobacter dehalogenans (strain 2CP-1 / ATCC BAA-258).